Here is a 231-residue protein sequence, read N- to C-terminus: Thiamine import ATP-binding protein ThiQ (231 aa).

Residues 2–230 (LRLEDLDIRK…PPPALRGYLG (229 aa)) enclose the ABC transporter domain. Position 32–39 (32–39 (GPSGAGKS)) interacts with ATP.

The protein belongs to the ABC transporter superfamily. Thiamine importer (TC 3.A.1.19.1) family. The complex is composed of two ATP-binding proteins (ThiQ), two transmembrane proteins (ThiP) and a solute-binding protein (ThiB).

The protein resides in the cell inner membrane. It carries out the reaction thiamine(out) + ATP + H2O = thiamine(in) + ADP + phosphate + H(+). Its function is as follows. Part of the ABC transporter complex ThiBPQ involved in thiamine import. Responsible for energy coupling to the transport system. The chain is Thiamine import ATP-binding protein ThiQ from Ruegeria sp. (strain TM1040) (Silicibacter sp.).